We begin with the raw amino-acid sequence, 239 residues long: tRNA (guanine-N(7)-)-methyltransferase (239 aa).

Residues Glu69, Glu94, Asp121, and Asp144 each contribute to the S-adenosyl-L-methionine site. Asp144 is an active-site residue. Substrate is bound by residues Lys148, Asp180, and 217 to 220; that span reads TKFE.

It belongs to the class I-like SAM-binding methyltransferase superfamily. TrmB family.

It carries out the reaction guanosine(46) in tRNA + S-adenosyl-L-methionine = N(7)-methylguanosine(46) in tRNA + S-adenosyl-L-homocysteine. Its pathway is tRNA modification; N(7)-methylguanine-tRNA biosynthesis. In terms of biological role, catalyzes the formation of N(7)-methylguanine at position 46 (m7G46) in tRNA. This is tRNA (guanine-N(7)-)-methyltransferase from Pseudoalteromonas atlantica (strain T6c / ATCC BAA-1087).